Consider the following 273-residue polypeptide: Dermonecrotic toxin LapSicTox-alphaIB2 (273 aa).

H5 is an active-site residue. Mg(2+)-binding residues include E25 and D27. H41 serves as the catalytic Nucleophile. Intrachain disulfides connect C45–C51 and C47–C190. D85 is a Mg(2+) binding site. N250 carries an N-linked (GlcNAc...) asparagine glycan.

The protein belongs to the arthropod phospholipase D family. Class II subfamily. The cofactor is Mg(2+). As to expression, expressed by the venom gland.

The protein localises to the secreted. It carries out the reaction an N-(acyl)-sphingosylphosphocholine = an N-(acyl)-sphingosyl-1,3-cyclic phosphate + choline. It catalyses the reaction an N-(acyl)-sphingosylphosphoethanolamine = an N-(acyl)-sphingosyl-1,3-cyclic phosphate + ethanolamine. The catalysed reaction is a 1-acyl-sn-glycero-3-phosphocholine = a 1-acyl-sn-glycero-2,3-cyclic phosphate + choline. The enzyme catalyses a 1-acyl-sn-glycero-3-phosphoethanolamine = a 1-acyl-sn-glycero-2,3-cyclic phosphate + ethanolamine. Dermonecrotic toxins cleave the phosphodiester linkage between the phosphate and headgroup of certain phospholipids (sphingolipid and lysolipid substrates), forming an alcohol (often choline) and a cyclic phosphate. This toxin acts on sphingomyelin (SM). It may also act on ceramide phosphoethanolamine (CPE), lysophosphatidylcholine (LPC) and lysophosphatidylethanolamine (LPE), but not on lysophosphatidylserine (LPS), and lysophosphatidylglycerol (LPG). It acts by transphosphatidylation, releasing exclusively cyclic phosphate products as second products. Induces dermonecrosis, hemolysis, increased vascular permeability, edema, inflammatory response, and platelet aggregation. This Loxosceles apachea (Apache recluse spider) protein is Dermonecrotic toxin LapSicTox-alphaIB2.